The following is a 126-amino-acid chain: Aspartate 1-decarboxylase (126 aa).

Catalysis depends on serine 25, which acts as the Schiff-base intermediate with substrate; via pyruvic acid. Serine 25 is modified (pyruvic acid (Ser)). A substrate-binding site is contributed by threonine 57. Tyrosine 58 functions as the Proton donor in the catalytic mechanism. 73-75 provides a ligand contact to substrate; it reads GAA.

It belongs to the PanD family. As to quaternary structure, heterooctamer of four alpha and four beta subunits. It depends on pyruvate as a cofactor. Post-translationally, is synthesized initially as an inactive proenzyme, which is activated by self-cleavage at a specific serine bond to produce a beta-subunit with a hydroxyl group at its C-terminus and an alpha-subunit with a pyruvoyl group at its N-terminus.

It localises to the cytoplasm. The catalysed reaction is L-aspartate + H(+) = beta-alanine + CO2. Its pathway is cofactor biosynthesis; (R)-pantothenate biosynthesis; beta-alanine from L-aspartate: step 1/1. Catalyzes the pyruvoyl-dependent decarboxylation of aspartate to produce beta-alanine. The protein is Aspartate 1-decarboxylase of Salmonella dublin (strain CT_02021853).